The following is a 301-amino-acid chain: Ribonuclease H2 subunit A (301 aa).

N-acetylmethionine is present on Met-1. The 224-residue stretch at Pro-28–Glu-251 folds into the RNase H type-2 domain. The a divalent metal cation site is built by Asp-34, Glu-35, and Asp-142. Position 217 is a phosphothreonine (Thr-217). A Phosphoserine modification is found at Ser-258.

It belongs to the RNase HII family. Eukaryotic subfamily. The RNase H2 complex is a heterotrimer composed of the catalytic subunit RNASEH2A and the non-catalytic subunits RNASEH2B and RNASEH2C. Requires Mn(2+) as cofactor. The cofactor is Mg(2+).

It is found in the nucleus. The enzyme catalyses Endonucleolytic cleavage to 5'-phosphomonoester.. Functionally, catalytic subunit of RNase HII, an endonuclease that specifically degrades the RNA of RNA:DNA hybrids. Participates in DNA replication, possibly by mediating the removal of lagging-strand Okazaki fragment RNA primers during DNA replication. Mediates the excision of single ribonucleotides from DNA:RNA duplexes. This chain is Ribonuclease H2 subunit A (Rnaseh2a), found in Rattus norvegicus (Rat).